The sequence spans 1059 residues: Zinc finger protein 658 (1059 aa).

The 72-residue stretch at 8–79 folds into the KRAB domain; sequence VSFQDVTVEF…EDEFLNQRYP (72 aa). A Glycyl lysine isopeptide (Lys-Gly) (interchain with G-Cter in SUMO2) cross-link involves residue Lys-178. The C2H2-type 1; degenerate zinc finger occupies 325–347; the sequence is FESNKCEENFSQSSAHIVHQKTQ. A C2H2-type 2; degenerate zinc finger spans residues 352–375; sequence FGEHNECTDALYQKLDFTAHQRIH. The segment at 381-406 adopts a C2H2-type 3; degenerate zinc-finger fold; sequence YLSDEHGKCRKSFYRKAHLIQHQRPH. Residues 412–434 form a C2H2-type 4; degenerate zinc finger; sequence YQYEECAKSFCSSSHPIQHPGTY. 14 consecutive C2H2-type zinc fingers follow at residues 440–462, 518–540, 546–568, 574–596, 602–624, 630–652, 658–680, 686–708, 714–736, 742–764, 770–792, 798–820, 826–848, and 854–876; these read YECN…LRIH, YECI…QRIH, YECV…QRVH, YECN…QRIH, YECS…HRIH, YECS…QRIH, YECN…QNIH, YECS…RRIH, YECS…ERIH, and YECN…HRIH. The C2H2-type 19; degenerate zinc-finger motif lies at 882–904; the sequence is YECNDCGKTFSKTSHLRAHLRTR. 5 consecutive C2H2-type zinc fingers follow at residues 910–932, 938–960, 966–988, 994–1016, and 1022–1045; these read YECS…QRVH, YECN…QRIH, and YECD…TRMH.

It belongs to the krueppel C2H2-type zinc-finger protein family.

The protein resides in the nucleus. Mediates transcriptional repression in response to zinc. Represses several genes, including SLC30A5, SLC30A10 and CBWD1, by binding to the zinc transcriptional regulatory element (ZTRE) (5'-C[AC]C[TAG]CC[TC]-N(0-50)-[GA]G[ATC]G[TG]G-3') found in the promoter region. May play a role in the control of ribosome biogenesis, regulating predominantly rRNA levels, as well as those of several ribosomal proteins, thus coordinating this highly zinc-demanding process with the available zinc supply. This is Zinc finger protein 658 (ZNF658) from Homo sapiens (Human).